The primary structure comprises 235 residues: Small ribosomal subunit protein uS2c (235 aa).

Belongs to the universal ribosomal protein uS2 family.

It localises to the plastid. Its subcellular location is the chloroplast. The sequence is that of Small ribosomal subunit protein uS2c (rps2) from Zygnema circumcarinatum (Green alga).